The chain runs to 753 residues: Transcription factor SOX-30 (753 aa).

2 disordered regions span residues 1-45 (MERA…TLSA) and 140-161 (QELG…TGPR). A compositionally biased stretch (pro residues) spans 7-22 (EPQPQQRPLRPAPPLL). The segment at residues 337 to 405 (VKRPMNAFMV…KHREEFPGWV (69 aa)) is a DNA-binding region (HMG box). Disordered regions lie at residues 514–540 (AGPS…PVSL) and 726–753 (PTST…LRDL). 2 stretches are compositionally biased toward polar residues: residues 531–540 (TVKQPTPVSL) and 726–739 (PTST…VNVT).

Interacts with CTNNB1, competitively inhibiting CTNNB1-TCF7L2/TCF4 interaction.

The protein resides in the nucleus. Its subcellular location is the cytoplasm. Functionally, acts both as a transcriptional activator and a repressor. Binds to the DNA sequence 5'-ACAAT-3' and shows a preference for guanine residues surrounding this core motif. Binds to its own promoter and activates its own transcription. Required to activate the expression of postmeiotic genes involved in spermiogenesis. Binds to the promoter region of CTNNB1 and represses its transcription which leads to inhibition of Wnt signaling. Also inhibits Wnt signaling by binding to the CTNNB1 protein, preventing interaction of CTNNB1 with TCF7L2/TCF4. The polypeptide is Transcription factor SOX-30 (SOX30) (Macaca fascicularis (Crab-eating macaque)).